The primary structure comprises 400 residues: MDSRLLSGIGAGPDSGSYTDLNRLNQLKVGKDRDGEANIRKVAQEFESLFLNEMLKSMRSANEALGDGNFMNSQTTKQYQDMYDQQLSVSLSKNAGGIGLADVLVRQLSKMKQGSRGNGENPFARVAENGAGRWPSNPSAQAGKALPMPEAGRDDSKLLNQRRLALPGKLAERMLAGIVPSASPAASQMQSLGQDSYLPAQSYPAASRRGFSTDGVDSQGSRRIAQPPLARGKSMFASADEFIATMLPMAQKAAERIGVDARYLVAQAALETGWGKSIIRQQDGGSSHNLFGIKTGSRWDGASARALTTEYEGGKAVKEIAAFRSYSSFEQSFHDYVSFLQGNDRYQNALDSAANPERFMQELQRAGYATDPQYARKVAQIARQMQTYQAVAAAGTPPLG.

Disordered regions lie at residues 112-155 and 204-229; these read KQGS…GRDD and PAASRRGFSTDGVDSQGSRRIAQPPL. The interval 238-400 is catalytic; sequence SADEFIATML…VAAAGTPPLG (163 aa). Active-site residues include Glu310 and Asp335.

In the N-terminal section; belongs to the FlgJ family. The protein in the C-terminal section; belongs to the glycosyl hydrolase 73 family.

The protein localises to the periplasm. Its function is as follows. Flagellum-specific muramidase which hydrolyzes the peptidoglycan layer to assemble the rod structure in the periplasmic space. This is Peptidoglycan hydrolase FlgJ (flgJ) from Pseudomonas aeruginosa (strain ATCC 15692 / DSM 22644 / CIP 104116 / JCM 14847 / LMG 12228 / 1C / PRS 101 / PAO1).